Reading from the N-terminus, the 41-residue chain is TSYGNGVHCNKSKCWIDVSELETYKAGTVSNPKDILWSLKE.

An intrachain disulfide couples Cys-9 to Cys-14.

It is found in the secreted. Functionally, bacteriocin active against S.aureus, S.typhi, B.thuringiensis, Klebsiella sp., E.coli KL16 and E.coli Gj137. This Lactococcus sp protein is Bacteriocin.